Consider the following 357-residue polypeptide: UDP-3-O-acylglucosamine N-acyltransferase (357 aa).

The active-site Proton acceptor is His-258.

Belongs to the transferase hexapeptide repeat family. LpxD subfamily. Homotrimer.

It carries out the reaction a UDP-3-O-[(3R)-3-hydroxyacyl]-alpha-D-glucosamine + a (3R)-hydroxyacyl-[ACP] = a UDP-2-N,3-O-bis[(3R)-3-hydroxyacyl]-alpha-D-glucosamine + holo-[ACP] + H(+). It participates in bacterial outer membrane biogenesis; LPS lipid A biosynthesis. Its function is as follows. Catalyzes the N-acylation of UDP-3-O-acylglucosamine using 3-hydroxyacyl-ACP as the acyl donor. Is involved in the biosynthesis of lipid A, a phosphorylated glycolipid that anchors the lipopolysaccharide to the outer membrane of the cell. This chain is UDP-3-O-acylglucosamine N-acyltransferase, found in Azorhizobium caulinodans (strain ATCC 43989 / DSM 5975 / JCM 20966 / LMG 6465 / NBRC 14845 / NCIMB 13405 / ORS 571).